Consider the following 64-residue polypeptide: Conotoxin LiC121 (64 aa).

Residues 1-22 form the signal peptide; it reads MRCVPVFIILLLLSPSAPSVDA. Residues 23-48 constitute a propeptide that is removed on maturation; that stretch reads HPKTKDDVPLASFHDDAKRTLQRLWI.

Belongs to the conotoxin T superfamily. In terms of processing, contains 2 disulfide bonds that can be either 'C1-C3, C2-C4' or 'C1-C4, C2-C3', since these disulfide connectivities have been observed for conotoxins with cysteine framework V (for examples, see AC P0DQQ7 and AC P81755). As to expression, expressed by the venom duct.

It is found in the secreted. This is Conotoxin LiC121 from Conus lividus (Livid cone).